The sequence spans 563 residues: Germacrene-A synthase (563 aa).

4 residues coordinate Mg(2+): D316, D320, D461, and E469. The short motif at 316–320 is the DDXXD motif element; that stretch reads DDIYD.

Belongs to the terpene synthase family. Tpsa subfamily. It depends on Mg(2+) as a cofactor. In terms of tissue distribution, expressed in young leaves. Detected in trichomes and cones.

The catalysed reaction is (2E,6E)-farnesyl diphosphate = (+)-(R)-germacrene A + diphosphate. Its pathway is secondary metabolite biosynthesis; terpenoid biosynthesis. Its function is as follows. Sesquiterpene synthase that catalyzes the formation of germacrene A. Can use farnesyl diphosphate as substrate, but not geranyl diphosphate or geranylgeranyl diphosphate. Beta-elemene, the initially measured product in the assay, is derived nonenzymatically from germacrene A. The sequence is that of Germacrene-A synthase from Humulus lupulus (European hop).